We begin with the raw amino-acid sequence, 58 residues long: Small ribosomal subunit protein bS21 (58 aa).

A disordered region spans residues 39-58 (EKPSVKRKRKSEVARKRKKF). The segment covering 43 to 58 (VKRKRKSEVARKRKKF) has biased composition (basic residues).

The protein belongs to the bacterial ribosomal protein bS21 family.

The polypeptide is Small ribosomal subunit protein bS21 (Streptococcus pneumoniae (strain ATCC BAA-255 / R6)).